Reading from the N-terminus, the 492-residue chain is Osmoregulated proline transporter OpuE (492 aa).

Transmembrane regions (helical) follow at residues Ile-3 to Ala-23, Leu-40 to Met-60, Val-62 to Ile-82, Ile-125 to Ser-145, Gly-161 to Val-181, Ala-190 to Val-210, Leu-224 to Leu-244, Ile-271 to Val-291, Ile-314 to Ser-334, Leu-365 to Leu-385, Leu-394 to Leu-414, Ala-424 to Ala-444, and Val-449 to Ile-469.

It belongs to the sodium:solute symporter (SSF) (TC 2.A.21) family.

Its subcellular location is the cell membrane. It carries out the reaction L-proline(in) + Na(+)(in) = L-proline(out) + Na(+)(out). In terms of biological role, catalyzes the uptake of extracellular proline under high-osmolarity growth conditions. Essential for the use of proline present in the environment as an osmoprotectant. The sequence is that of Osmoregulated proline transporter OpuE from Bacillus subtilis (strain 168).